The sequence spans 546 residues: SusD-like protein BACOVA_02651 (546 aa).

A signal peptide spans 1–21 (MRIFMKSKLLVIATTALLFAA). Cys-22 carries the N-palmitoyl cysteine lipid modification. Cys-22 is lipidated: S-diacylglycerol cysteine.

The protein belongs to the SusD family.

It is found in the cell outer membrane. It participates in glucan metabolism; xyloglucan degradation. In terms of biological role, polysaccharide-binding protein present at the surface of the cell. Probably mediates xyloglucan-binding before xyloglucan transport in the periplasm for degradation. In Bacteroides ovatus (strain ATCC 8483 / DSM 1896 / JCM 5824 / BCRC 10623 / CCUG 4943 / NCTC 11153), this protein is SusD-like protein BACOVA_02651.